The sequence spans 61 residues: Large ribosomal subunit protein bL32 (61 aa).

The disordered stretch occupies residues 1–20 (MAVQKSKPSRAKRGKRRSHD). The span at 7–19 (KPSRAKRGKRRSH) shows a compositional bias: basic residues.

Belongs to the bacterial ribosomal protein bL32 family.

This Buchnera aphidicola subsp. Cinara cedri (strain Cc) protein is Large ribosomal subunit protein bL32.